A 169-amino-acid chain; its full sequence is Ribosome maturation factor RimM (169 aa).

One can recognise a PRC barrel domain in the interval 92-167 (PKDTYFICDI…YMKIKVVEGL (76 aa)).

It belongs to the RimM family. As to quaternary structure, binds ribosomal protein uS19.

It is found in the cytoplasm. Its function is as follows. An accessory protein needed during the final step in the assembly of 30S ribosomal subunit, possibly for assembly of the head region. Essential for efficient processing of 16S rRNA. May be needed both before and after RbfA during the maturation of 16S rRNA. It has affinity for free ribosomal 30S subunits but not for 70S ribosomes. The protein is Ribosome maturation factor RimM of Caldicellulosiruptor bescii (strain ATCC BAA-1888 / DSM 6725 / KCTC 15123 / Z-1320) (Anaerocellum thermophilum).